The primary structure comprises 228 residues: CD302 antigen (228 aa).

The first 20 residues, Met1–Ala20, serve as a signal peptide directing secretion. Residues Asp21–His165 are Extracellular-facing. In terms of domain architecture, C-type lectin spans Phe30–Leu149. Asn107 carries an N-linked (GlcNAc...) asparagine glycan. Cys125 and Cys140 are joined by a disulfide. The chain crosses the membrane as a helical span at residues Ile166 to Ile186. At Trp187–Asp228 the chain is on the cytoplasmic side.

The protein localises to the membrane. It is found in the cell projection. The protein resides in the filopodium. It localises to the cytoplasm. Its subcellular location is the cell cortex. The protein localises to the microvillus. In terms of biological role, potential multifunctional C-type lectin receptor that may play roles in endocytosis and phagocytosis as well as in cell adhesion and migration. The polypeptide is CD302 antigen (Cd302) (Rattus norvegicus (Rat)).